The following is a 983-amino-acid chain: Serine/threonine-protein kinase N2 (983 aa).

Residues 33–109 form the REM-1 1 domain; that stretch reads KLDFSDTMVQ…LQELNAHIVV (77 aa). Position 77 is an N6-acetyllysine (Lys-77). A disordered region spans residues 107–135; sequence IVVSDPEDSTDCPRTPDTPNSDSRSSTSN. At Ser-110 the chain carries Phosphoserine. Phosphothreonine occurs at positions 121 and 124. The span at 121–135 shows a compositional bias: low complexity; sequence TPDTPNSDSRSSTSN. 2 REM-1 domains span residues 121-203 and 204-284; these read TPDT…TNEL and AFDN…ELPR. 4 positions are modified to phosphoserine: Ser-301, Ser-305, Ser-359, and Ser-361. The disordered stretch occupies residues 351-382; that stretch reads TSVALPGWSPSDNRSSFMSRTSKSKSGSSRNL. The region spanning 352-472 is the C2 domain; the sequence is SVALPGWSPS…LYLEPQGTLF (121 aa). Positions 364–380 are enriched in low complexity; it reads RSSFMSRTSKSKSGSSR. The segment at 381 to 462 is necessary to rescue apical junction formation; it reads NLLKTDDLSN…FLDNQRHGMC (82 aa). Phosphoserine is present on residues Ser-534, Ser-582, Ser-619, and Ser-630. Residues 553–588 form a disordered region; it reads LAPPASDSTVTKLDFDLEPEPPPAPPRASSLGETDE. Residues 656 to 915 enclose the Protein kinase domain; sequence FRCCAVLGRG…AEDVKKHPFF (260 aa). ATP-binding positions include 662-670 and Lys-685; that span reads LGRGHFGKV. Residue Asp-781 is the Proton acceptor of the active site. Phosphothreonine; by PDPK1 is present on Thr-815. The tract at residues 916-976 is necessary for the catalytic activity; the sequence is RLTDWSALMD…EEEQEMFHDF (61 aa). In terms of domain architecture, AGC-kinase C-terminal spans 916 to 983; that stretch reads RLTDWSALMD…HDFDYVADWC (68 aa). Phosphoserine is present on Ser-951. Thr-957 carries the post-translational modification Phosphothreonine. The segment at 977-983 is negatively regulates the responsiveness of the catalytic activity by cardiolipin and is required for optimal activation by the GTP-bound RhoA; sequence DYVADWC.

The protein belongs to the protein kinase superfamily. AGC Ser/Thr protein kinase family. PKC subfamily. Interacts (via the REM repeats) with RHOA (GTP-bound form preferentially) and interacts (via the REM repeats) with RAC1 (GTP-bound form preferentially); the interactions induce its autophosphorylation. Interacts with NCK1 (via SH3 domains). Interacts with RHOC. Interacts with NCK1 and NCK2. Interacts with CD44. Interacts (via C-terminal kinase domain) with PDPK1; the interaction stimulates PDPK1 kinase activity. Interacts with MAP3K2; the interaction activates PRK2 kinase activity in a MAP3K2-independent kinase activity. Interacts (via C-terminal domain) with AKT1; the interaction occurs with the C-terminal cleavage product of PRK2 in apoptotic cells. Interacts (via C-terminus) with PTPN13 (via PDZ 3 domain). Interacts with CDK10. Post-translationally, phosphorylated during mitosis. Autophosphorylated. Phosphorylated. Phosphorylated by CDK10. In terms of processing, activated by limited proteolysis with trypsin. Proteolytically cleaved by caspase-3 during the induction of apoptotic cell death. As to expression, ubiquitous. Highly expressed in liver and lung Expressed in astrocytes (at protein level). Ubiquitous.

It localises to the cytoplasm. The protein resides in the nucleus. The protein localises to the membrane. It is found in the cell projection. Its subcellular location is the lamellipodium. It localises to the cytoskeleton. The protein resides in the cleavage furrow. The protein localises to the midbody. It is found in the cell junction. The catalysed reaction is L-seryl-[protein] + ATP = O-phospho-L-seryl-[protein] + ADP + H(+). It carries out the reaction L-threonyl-[protein] + ATP = O-phospho-L-threonyl-[protein] + ADP + H(+). Kinase activity is activated upon binding to GTP-bound Rho1/Rac1 GTPases. Activated by caspase-3 (CASP3) cleavage during apoptosis. Activated by lipids, particularly cardiolipin and to a lesser extent by other acidic phospholipids and unsaturated fatty acids. Two specific sites, Thr-815 (activation loop of the kinase domain) and Thr-957 (turn motif), need to be phosphorylated for its full activation. PKC-related serine/threonine-protein kinase and Rho/Rac effector protein that participates in specific signal transduction responses in the cell. Plays a role in the regulation of cell cycle progression, actin cytoskeleton assembly, cell migration, cell adhesion, tumor cell invasion and transcription activation signaling processes. Phosphorylates CTTN in hyaluronan-induced astrocytes and hence decreases CTTN ability to associate with filamentous actin. Phosphorylates HDAC5, therefore lead to impair HDAC5 import. Direct RhoA target required for the regulation of the maturation of primordial junctions into apical junction formation in bronchial epithelial cells. Required for G2/M phases of the cell cycle progression and abscission during cytokinesis in a ECT2-dependent manner. Stimulates FYN kinase activity that is required for establishment of skin cell-cell adhesion during keratinocytes differentiation. Regulates epithelial bladder cells speed and direction of movement during cell migration and tumor cell invasion. Inhibits Akt pro-survival-induced kinase activity. Mediates Rho protein-induced transcriptional activation via the c-fos serum response factor (SRF). Involved in the negative regulation of ciliogenesis. The protein is Serine/threonine-protein kinase N2 (Pkn2) of Mus musculus (Mouse).